The following is a 713-amino-acid chain: Polyribonucleotide nucleotidyltransferase (713 aa).

2 residues coordinate Mg(2+): Asp493 and Asp499. The KH domain occupies Pro560–Ile619. Positions Gly629–Lys697 constitute an S1 motif domain.

This sequence belongs to the polyribonucleotide nucleotidyltransferase family. Mg(2+) serves as cofactor.

It localises to the cytoplasm. It catalyses the reaction RNA(n+1) + phosphate = RNA(n) + a ribonucleoside 5'-diphosphate. Involved in mRNA degradation. Catalyzes the phosphorolysis of single-stranded polyribonucleotides processively in the 3'- to 5'-direction. The chain is Polyribonucleotide nucleotidyltransferase from Burkholderia pseudomallei (strain 1106a).